The primary structure comprises 216 residues: Nucleoside triphosphate pyrophosphatase (216 aa).

D86 acts as the Proton acceptor in catalysis.

This sequence belongs to the Maf family. Requires a divalent metal cation as cofactor.

It localises to the cytoplasm. The enzyme catalyses a ribonucleoside 5'-triphosphate + H2O = a ribonucleoside 5'-phosphate + diphosphate + H(+). It carries out the reaction a 2'-deoxyribonucleoside 5'-triphosphate + H2O = a 2'-deoxyribonucleoside 5'-phosphate + diphosphate + H(+). In terms of biological role, nucleoside triphosphate pyrophosphatase. May have a dual role in cell division arrest and in preventing the incorporation of modified nucleotides into cellular nucleic acids. This is Nucleoside triphosphate pyrophosphatase from Dictyostelium discoideum (Social amoeba).